The sequence spans 62 residues: DKPTTKPICEQAFGNSGPCFAYIKLYSYNQKTKKCEEFIYGGCKGNDNRFDTLAECEQKCIK.

The BPTI/Kunitz inhibitor domain occupies 9-60 (CEQAFGNSGPCFAYIKLYSYNQKTKKCEEFIYGGCKGNDNRFDTLAECEQKC). 3 cysteine pairs are disulfide-bonded: C9/C60, C19/C43, and C35/C56.

In terms of biological role, inhibits chymotrypsin and thus avoids the accidental chymotrypsin-mediated activation of prophenoloxidase. This enzyme is required by the insect immune system to produce melanin which is used to engulf foreign objects. Functionally, also inhibits trypsin weakly, this may be due to the presence of a pseudo-reactive bond in positions 44-45 (Lys-Gly). This is Chymotrypsin inhibitor SCI-II from Bombyx mori (Silk moth).